An 87-amino-acid polypeptide reads, in one-letter code: MFVIELALKFSPLPLAVQRKKLEDAKALYNTVRECLENGHPKLLELNCEQLKDKKIAVLSSELLAVQIYEKTAVGGGIKRPGFSFDE.

This sequence belongs to the UPF0367 family.

The sequence is that of UPF0367 protein P9211_01391 from Prochlorococcus marinus (strain MIT 9211).